The primary structure comprises 284 residues: Trimeric intracellular cation channel type B (284 aa).

Residues 1-15 (MESFSELSLQFSQLS) are Lumenal-facing. A helical transmembrane segment spans residues 16–32 (MFPFFETAHYLTSVMSA). Over 33–44 (REQAGAVDVASR) the chain is Cytoplasmic. The helical transmembrane segment at 45–68 (SPLASWFSSMLYCFGGGILSSILL) threads the bilayer. At 69–79 (AEPPVGILSNT) the chain is on the lumenal side. A helical membrane pass occupies residues 80 to 99 (TSIILASAVWYMVYYFPYDL). Over 100–102 (FYN) the chain is Cytoplasmic. The helical transmembrane segment at 103–121 (CFFFLPIRLILAGMKEVTR) threads the bilayer. A 1,2-diacyl-sn-glycero-3-phospho-(1D-myo-inositol-4,5-bisphosphate) contacts are provided by K117 and R121. Over 122–139 (TWKILSGVAHAHSHYKDA) the chain is Lumenal. A helical transmembrane segment spans residues 140–157 (MLVMITIGWARGAGGGLI). The Cytoplasmic segment spans residues 158-178 (SNFEQLVRGVWKPESNEFLKM). Residues 179–196 (SYPVKVTLIGAVLFTLQH) form a helical membrane-spanning segment. Residues 197-204 (GQYLPISR) are Lumenal-facing. The chain crosses the membrane as a helical span at residues 205 to 225 (HNLMFIYTLFLILIKVTMMLT). Over 226 to 284 (RSTASPFLPLETSLQHILFSRQQIPAEVRESPSSSGDKGKPSKKTLDKDSGEQDNKKDN) the chain is Cytoplasmic. The disordered stretch occupies residues 250 to 284 (PAEVRESPSSSGDKGKPSKKTLDKDSGEQDNKKDN). Over residues 262-284 (DKGKPSKKTLDKDSGEQDNKKDN) the composition is skewed to basic and acidic residues.

It belongs to the TMEM38 family. As to quaternary structure, homotrimer; conformation seems to be controled by binding to diacylglycerol (DAG).

Its subcellular location is the endoplasmic reticulum membrane. It catalyses the reaction K(+)(in) = K(+)(out). Its activity is regulated as follows. Channel activity is activated by increased cytosolic Ca(2+) levels and blocked by luminal high Ca(2+) levels. In terms of biological role, intracellular monovalent cation channel required for maintenance of rapid intracellular calcium release. Acts as a potassium counter-ion channel that functions in synchronization with calcium release from intracellular stores. Activated by increased cytosolic Ca(2+) levels. The sequence is that of Trimeric intracellular cation channel type B (tmem38b) from Xenopus tropicalis (Western clawed frog).